A 174-amino-acid polypeptide reads, in one-letter code: Variant surface antigen B (174 aa).

Residues 1 to 29 form the signal peptide; the sequence is MKKSIFSKKLLVSFGSLVALASIPLIAIS. Residue Cys30 is the site of N-palmitoyl cysteine attachment. A lipid anchor (S-diacylglycerol cysteine) is attached at Cys30. The interval 32–174 is disordered; that stretch reads QTNTDKSQQP…SQDSGNGSTK (143 aa). A compositionally biased stretch (low complexity) spans 38-49; it reads SQQPGSGSSTSG. Positions 50 to 75 are enriched in gly residues; the sequence is GQSGTGLGSGTTTGGQSGTTTGGRSG. A compositionally biased stretch (low complexity) spans 76 to 97; the sequence is SGSSSSTTGGQTGTGSDSQDSG. 7 consecutive repeat copies span residues 88 to 99, 100 to 111, 112 to 123, 124 to 135, 136 to 147, 148 to 159, and 160 to 171. A 7 X 12 AA tandem repeats region spans residues 88–171; sequence GTGSDSQDSG…GSDSQDSGNG (84 aa). Positions 102–174 are enriched in polar residues; sequence GSDSQDSGAK…SQDSGNGSTK (73 aa).

The protein localises to the cell membrane. Functionally, responsible for the antigenic diversity for host adaptation. This Mesomycoplasma hyorhinis (Mycoplasma hyorhinis) protein is Variant surface antigen B (vlpB).